The primary structure comprises 503 residues: Aromatase (503 aa).

The next 3 membrane-spanning stretches (helical) occupy residues 19–39 (EVVPIASIAILLLTGFLLLVW), 53–73 (FLGIGPLISHCRFLWMGIGSA), and 303–323 (MLIAAPDTMSVSVFFMLFLIA). Substrate is bound by residues Asp309 and Met374. Cys437 lines the heme pocket.

It belongs to the cytochrome P450 family. Requires heme as cofactor.

It localises to the endoplasmic reticulum membrane. The protein resides in the microsome membrane. It catalyses the reaction testosterone + 3 reduced [NADPH--hemoprotein reductase] + 3 O2 = 17beta-estradiol + formate + 3 oxidized [NADPH--hemoprotein reductase] + 4 H2O + 4 H(+). The catalysed reaction is androst-4-ene-3,17-dione + 3 reduced [NADPH--hemoprotein reductase] + 3 O2 = estrone + formate + 3 oxidized [NADPH--hemoprotein reductase] + 4 H2O + 4 H(+). It carries out the reaction androst-4-ene-3,17-dione + reduced [NADPH--hemoprotein reductase] + O2 = 19-hydroxyandrost-4-ene-3,17-dione + oxidized [NADPH--hemoprotein reductase] + H2O + H(+). The enzyme catalyses 19-hydroxyandrost-4-ene-3,17-dione + reduced [NADPH--hemoprotein reductase] + O2 = 19-oxo-androst-4-ene-3,17-dione + oxidized [NADPH--hemoprotein reductase] + 2 H2O + H(+). It catalyses the reaction 19-oxo-androst-4-ene-3,17-dione + reduced [NADPH--hemoprotein reductase] + O2 = estrone + formate + oxidized [NADPH--hemoprotein reductase] + H2O + 2 H(+). The catalysed reaction is estrone + reduced [NADPH--hemoprotein reductase] + O2 = 2-hydroxyestrone + oxidized [NADPH--hemoprotein reductase] + H2O + H(+). It carries out the reaction 17beta-hydroxy-5alpha-androstan-3-one + reduced [NADPH--hemoprotein reductase] + O2 = 17beta,19-dihydroxy-3-oxo-5alpha-androstanone + oxidized [NADPH--hemoprotein reductase] + H2O + H(+). The enzyme catalyses 17beta,19-dihydroxy-3-oxo-5alpha-androstanone + reduced [NADPH--hemoprotein reductase] + O2 = 17beta-hydroxy-3,19-dioxo-5alpha-androstanone + oxidized [NADPH--hemoprotein reductase] + 2 H2O + H(+). It catalyses the reaction 17beta-hydroxy-3,19-dioxo-5alpha-androstanone + reduced [NADPH--hemoprotein reductase] + O2 = 17beta-hydroxy-3-oxo-19-nor-5alpha-androst-1-ene + formate + oxidized [NADPH--hemoprotein reductase] + H2O + 2 H(+). It participates in steroid hormone biosynthesis. In terms of biological role, a cytochrome P450 monooxygenase that catalyzes the conversion of C19 androgens, androst-4-ene-3,17-dione (androstenedione) and testosterone to the C18 estrogens, estrone and estradiol, respectively. Catalyzes three successive oxidations of C19 androgens: two conventional oxidations at C19 yielding 19-hydroxy and 19-oxo/19-aldehyde derivatives, followed by a third oxidative aromatization step that involves C1-beta hydrogen abstraction combined with cleavage of the C10-C19 bond to yield a phenolic A ring and formic acid. Alternatively, the third oxidative reaction yields a 19-norsteroid and formic acid. Converts dihydrotestosterone to delta1,10-dehydro 19-nordihydrotestosterone and may play a role in homeostasis of this potent androgen. Also displays 2-hydroxylase activity toward estrone. Mechanistically, uses molecular oxygen inserting one oxygen atom into a substrate, and reducing the second into a water molecule, with two electrons provided by NADPH via cytochrome P450 reductase (CPR; NADPH-ferrihemoprotein reductase). The sequence is that of Aromatase (CYP19A1) from Capra hircus (Goat).